Here is a 1317-residue protein sequence, read N- to C-terminus: MYFNNELSGLKDRFLKSLLAQKYPDRINFFLWELKFLDCFLHLQNFAFASECGMLDVSQKMLKNFKRMCATFRSIRPNAGSDNAFAYLKEVICKRLCATLLNTRPDACSDDGFAYWNEVIWKTKQEFRAKYSFPKTPLASNKVDDDDINIHSPKFVMEFIDAVVGNLNVLVKINDPCSLLFVPGPKEQIDQVSKELKLLRFFVCFVSNKCIEPQYGHTTFYIHALIEASHIAMVVWLHLPVYGNGNQDLAPSEVSRLLSDFISRNSNYIDVLKALKSTIPQAQNKHAAESGIVETPTHNLMVGLSDQMVNLQEMLCLLRDNLIHLPILDLEFHLQDMDSVILDAGLLIYSLYDIEGEKEDTVLDDMNRALGFDLPRNIEPIKVMVYLVMQKAFQCNLPRVHGLGYVDFLLKNLNDFQGRYSDSLAFLKNQLQVIQTEFESLQPFLKVVIEEPHNKLKTLNEDCATQIIRKAYEVEYVVDACINKVAPHWCLERWLLDIIEEITCIKAKIQEKNTVEDTMKTVITHTSSQLARTPRMNEEIVGFKDVIENLRNRLLNGTKGQDVISIHGMPGLGKTTLANRLYSDRSVVSHFDICAQCCVSQVYSYKELLLALLCDAVGDDSARRKHNENKLADKLRKTLLSRRYLILVDDVWDNSAWDDLRGCFPDANNRSRIILTTRHHEVAKYASVHSDPLHLRMFDEDESWKLLEKKVFGEKRCSSLLLKDVGLRIAKMCGQLPLSIVLVAGILSEMEKEVECWEQVANNLGTHIHNDSRAIVNQSYHVLPCHLKSCFLYFGAFLEDEVIDISRLIRLWISESFIKSSEGRRLEDIAEGYLENLIGRNLVMVTQRADSDGKVKACRLHDVLLDFCKERAAEENFLLWINRDQISTKAVYSHKQHAHLAFTEMDNLVEWSASCSLVGSVLFKNPDSYLYSPAFSTSLILLNFKFLKVLDLEHQVVIDFIPTELFYLRYLSASIEQNSIPSSISNLWNLETLILKSTPVGRHNTLLLPSTIWDMVKLRHLHIPKFSPENEEALLENSARLYDLETISTPYFSSVEDAELILRKTPNLRKLICEVECLEYPPQYHVLNFPIRLEILKLYRSKAFKTIPFCISAPNLKYLKLSGFYLDSQYLSETVDHLKHLEVLKLCDLEFGDHREWKVSNGMFPQLKILKLEYLSLMKWIVADDAFPNLEQLVLHGCQDLMEIPSCFMDILSLKYIEVDMSNKSVVKSAKNIEETQVEDNQNTNFKLVIIKKMVLKFDIYQNHDKGRLETFKKLVPLPGVKSVRFDMDEKKVTVTGVMDANEVQLVVSKLRKRGML.

Coiled coils occupy residues 419 to 442 (RYSD…ESLQ) and 535 to 556 (RMNE…RLLN). Residues 521–823 (TVITHTSSQL…SESFIKSSEG (303 aa)) form the NB-ARC domain. 568-575 (GMPGLGKT) is a binding site for ATP. 6 LRR repeats span residues 944–968 (FKFL…LFYL), 987–1015 (LWNL…IWDM), 1090–1114 (PIRL…ISAP), 1138–1161 (LKHL…KVSN), 1164–1186 (FPQL…ADDA), and 1187–1211 (FPNL…FMDI). Residues 1251-1317 (IKKMVLKFDI…VSKLRKRGML (67 aa)) form the HMA domain.

It belongs to the disease resistance NB-LRR family.

It is found in the cytoplasm. Its subcellular location is the membrane. Functionally, confers resistance to late blight (Phytophthora infestans) races carrying the avirulence gene Avr1. Resistance proteins guard the plant against pathogens that contain an appropriate avirulence protein via an indirect interaction with this avirulence protein. That triggers a defense system including the hypersensitive response, which restricts the pathogen growth. This Solanum demissum (Wild potato) protein is Putative late blight resistance protein homolog R1B-14 (R1B-14).